The primary structure comprises 393 residues: Ig heavy chain C region (393 aa).

3 Ig-like domains span residues 63-157 (PTVI…RNIT), 168-260 (PVIK…ASIH), and 270-370 (PSVS…RTVN). N-linked (GlcNAc...) asparagine glycosylation is found at asparagine 119, asparagine 155, asparagine 200, asparagine 230, asparagine 329, asparagine 366, asparagine 370, and asparagine 380.

This chain is Ig heavy chain C region, found in Heterodontus francisci (Horn shark).